A 309-amino-acid chain; its full sequence is Glutaminase (309 aa).

Substrate is bound by residues Ser65, Asn117, Glu162, Asn169, Tyr193, Tyr245, and Val263.

Belongs to the glutaminase family. As to quaternary structure, homotetramer.

The enzyme catalyses L-glutamine + H2O = L-glutamate + NH4(+). This chain is Glutaminase, found in Shouchella clausii (strain KSM-K16) (Alkalihalobacillus clausii).